A 461-amino-acid chain; its full sequence is Alkaline phosphatase 4 (461 aa).

The signal sequence occupies residues 1-41 (MKKMSLFQNMKSKLLPIAAVSVLTAGIFAGAELQQTEKASA). A Mg(2+)-binding site is contributed by Asp58. Residue Asp58 participates in Zn(2+) binding. The active-site Phosphoserine intermediate is the Ser108. Residues Thr161 and Glu282 each coordinate Mg(2+). Asp287, His291, Asp329, His330, and His423 together coordinate Zn(2+).

This sequence belongs to the alkaline phosphatase family. Monomer. Requires Mg(2+) as cofactor. The cofactor is Zn(2+).

It catalyses the reaction a phosphate monoester + H2O = an alcohol + phosphate. In Bacillus subtilis (strain 168), this protein is Alkaline phosphatase 4 (phoA).